The chain runs to 922 residues: Non-centrosomal microtubule array protein 1 (922 aa).

Over residues 1–10 (MSNERVSTGS) the composition is skewed to polar residues. Disordered regions lie at residues 1-134 (MSNE…HLPP), 250-277 (PVRLRKRGDTSRRDAVEAGFEPRDTVPR), 465-491 (KSRHLSESRDEMRGGAERRGSGGQMNL), and 533-563 (TQKEQSSHSTPSQSRHSSSKSSHFNGSSNLS). Basic and acidic residues-rich tracts occupy residues 43–54 (SMERKDMPDRPK) and 70–94 (PKDRSSDSGDGDSPRPRKFSSKECA). Residues 99-113 (SNTSSEHSSRSNSST) are compositionally biased toward low complexity. Composition is skewed to basic and acidic residues over residues 256–276 (RGDTSRRDAVEAGFEPRDTVP) and 468–484 (HLSESRDEMRGGAERRG). Residues 539–563 (SHSTPSQSRHSSSKSSHFNGSSNLS) are compositionally biased toward low complexity. Positions 564-728 (TSEQLRLQEM…RSVSTLRLEQ (165 aa)) form a coiled coil.

Its subcellular location is the cytoplasm. It is found in the cytoskeleton. It localises to the apical cell membrane. The protein resides in the cell junction. The protein localises to the hemidesmosome. Its subcellular location is the adherens junction. Functionally, plays a role in the assembly of microtubule arrays in the germline acting redundantly with ptrn-1 to control circumferential microtubule assembly along the body which is necessary for larval development, viability, and morphology and integrity of the epidermis. Required for microtubule stability and anchorage by binding to microtubule minus ends. Recruited to hemidesomosomes in early embryonic elongation to direct the nucleation and growth of non-centrosomal microtubules. In terms of biological role, required for normal nuclear migration in the embryonic epidermis. Its function is as follows. Directs the assembly of non-centrosomal microtubule arrays that determine the position of nuclei within intracellular compartments in the epidermis and this is independent of ptrn-1 activity. The sequence is that of Non-centrosomal microtubule array protein 1 from Caenorhabditis elegans.